A 295-amino-acid polypeptide reads, in one-letter code: Bifunctional protein FolD (295 aa).

NADP(+)-binding positions include 166-168 (GRS), Ser191, and Ile232.

It belongs to the tetrahydrofolate dehydrogenase/cyclohydrolase family. In terms of assembly, homodimer.

It catalyses the reaction (6R)-5,10-methylene-5,6,7,8-tetrahydrofolate + NADP(+) = (6R)-5,10-methenyltetrahydrofolate + NADPH. The enzyme catalyses (6R)-5,10-methenyltetrahydrofolate + H2O = (6R)-10-formyltetrahydrofolate + H(+). The protein operates within one-carbon metabolism; tetrahydrofolate interconversion. Catalyzes the oxidation of 5,10-methylenetetrahydrofolate to 5,10-methenyltetrahydrofolate and then the hydrolysis of 5,10-methenyltetrahydrofolate to 10-formyltetrahydrofolate. The chain is Bifunctional protein FolD from Rhodopseudomonas palustris (strain HaA2).